Reading from the N-terminus, the 301-residue chain is Probable alpha-L-glutamate ligase (301 aa).

The region spanning 104–287 is the ATP-grasp domain; sequence LQLLARKGIG…VATKVIEFIE (184 aa). Residues lysine 141, 178–179, aspartate 187, and 211–213 contribute to the ATP site; these read EF and RSN. Residues aspartate 248, glutamate 260, and asparagine 262 each coordinate Mg(2+). Mn(2+)-binding residues include aspartate 248, glutamate 260, and asparagine 262.

It belongs to the RimK family. It depends on Mg(2+) as a cofactor. Mn(2+) is required as a cofactor.

The protein is Probable alpha-L-glutamate ligase of Nitrosococcus oceani (strain ATCC 19707 / BCRC 17464 / JCM 30415 / NCIMB 11848 / C-107).